Consider the following 550-residue polypeptide: Cell pattern formation-associated protein STUA (550 aa).

In terms of domain architecture, HTH APSES-type spans 86 to 192 (RVTATLWEDE…HNIGALLYHP (107 aa)). The segment at residues 120 to 141 (GTKLLNVAGMTRGRRDGILKSE) is a DNA-binding region (H-T-H motif). A compositionally biased stretch (polar residues) spans 246–266 (SLANGPQSLASTPQPLTNGSQ). Disordered regions lie at residues 246 to 277 (SLAN…GMLK), 371 to 412 (HHQP…VKRR), 447 to 467 (KRRD…DHLN), and 527 to 550 (APVY…QSFG). Residues 385-395 (RGRDEDDDVHR) are compositionally biased toward basic and acidic residues. Positions 517–546 (TVAASPSYPSAPVYDTGARPPSAISAPRRQ) are nuclear localization domain.

This sequence belongs to the EFG1/PHD1/stuA family.

The protein resides in the nucleus. Functionally, transcription factor that regulates asexual reproduction. Binds the StuA-response elements (StRE) with the consensus sequence 5'-(A/T)CGCG(T/A)N(A/C)-3' at the promoters of target genes. Differentially regulates the development of macroconidia, microconidia, and chlamydospores. Acts as a positive regulator for the development of macroconidia and as a negative regulator for the development of chlamydospores. Involved in microconidium formation specifically in infected plants. This Fusarium oxysporum (Fusarium vascular wilt) protein is Cell pattern formation-associated protein STUA.